A 730-amino-acid chain; its full sequence is ATP-binding cassette sub-family D member 1 (730 aa).

The next 4 helical transmembrane spans lie at 24–44 (AFSY…VTIP), 137–157 (FCLI…GALV), 169–189 (ALVL…NSMI), and 276–296 (ANII…AHIL). The ABC transmembrane type-1 domain occupies 136-373 (TFCLISRTFL…WFIMLEQFFM (238 aa)). The ABC transporter domain occupies 505–727 (ISLRAVPVVT…MNSDEEQKGQ (223 aa)). 538–545 (GPNGCGKS) contacts ATP.

The protein belongs to the ABC transporter superfamily. ABCD family. Peroxisomal fatty acyl CoA transporter (TC 3.A.1.203) subfamily.

Its subcellular location is the peroxisome membrane. It carries out the reaction an acyl-CoA(out) + ATP + H2O = an acyl-CoA(in) + ADP + phosphate + H(+). Plays a role in the transport of free very-long-chain fatty acids (VLCFAs) as well as their CoA-esters across the peroxisomal membrane by acting as an ATP-specific binding subunit releasing ADP after ATP hydrolysis. Thus, plays a role in regulation of VLCFAs and energy metabolism namely, in the degradation and biosynthesis of fatty acids by beta-oxidation, mitochondrial function and microsomal fatty acid elongation. This Drosophila melanogaster (Fruit fly) protein is ATP-binding cassette sub-family D member 1.